The chain runs to 303 residues: MSVFLSVIGALLLDALLGEPKRAHPLVAFGRLADRLEQHFNGAAGRGWRSHGVTAWCLAVLPLTLLAWLLSLLPGIGWLAEIVLLYLALGLRSLGEHALPVAQALWRHDLPEARRRVACIVSRDTSQLDEEGVARAATESVLENGSDAVFAALFWFIVAGAPGVVLYRLSNTLDAMWGYRNARFERFGWAAARIDDLLNYVPARLVAVTYALLGRTRRALRCWRTQAPLWDSPNAGPVMAAGAGALGVVLGGAAIYHGELHARPELGRGSAPQARHIEHALDLVWAGVGVWLLVLLFGGWLYA.

Transmembrane regions (helical) follow at residues L65–L85, D147–Y167, A235–I255, and L283–A303.

The protein belongs to the CobD/CbiB family.

The protein resides in the cell membrane. Its pathway is cofactor biosynthesis; adenosylcobalamin biosynthesis. Its function is as follows. Converts cobyric acid to cobinamide by the addition of aminopropanol on the F carboxylic group. The polypeptide is Cobalamin biosynthesis protein CobD (Stutzerimonas stutzeri (strain A1501) (Pseudomonas stutzeri)).